An 882-amino-acid chain; its full sequence is Alanine--tRNA ligase (882 aa).

Zn(2+)-binding residues include histidine 563, histidine 567, cysteine 665, and histidine 669.

Belongs to the class-II aminoacyl-tRNA synthetase family. The cofactor is Zn(2+).

The protein resides in the cytoplasm. It catalyses the reaction tRNA(Ala) + L-alanine + ATP = L-alanyl-tRNA(Ala) + AMP + diphosphate. Functionally, catalyzes the attachment of alanine to tRNA(Ala) in a two-step reaction: alanine is first activated by ATP to form Ala-AMP and then transferred to the acceptor end of tRNA(Ala). Also edits incorrectly charged Ser-tRNA(Ala) and Gly-tRNA(Ala) via its editing domain. This chain is Alanine--tRNA ligase, found in Synechococcus sp. (strain RCC307).